The primary structure comprises 244 residues: Transcription factor Sox-12 (244 aa).

Residues 1 to 22 form a disordered region; sequence MVQNKTTGSCPKPTEVAPGGPS. Positions 31–99 form a DNA-binding region, HMG box; the sequence is IKRPMNAFMV…KHMADYPNYK (69 aa). Disordered regions lie at residues 101–137 and 152–193; these read RPRR…QMDT and GDQV…HEGL. Polar residues-rich tracts occupy residues 120–137 and 176–186; these read STAT…QMDT and HTKTVPSSPQS.

Expressed at a low level in embryos, and in the adult lung, ovary, skeletal muscle, testis, brain and heart.

Its subcellular location is the nucleus. In terms of biological role, transcription factor that binds to the sequence 5'-AACAAT-3'. Acts as a transcriptional activator. In Xenopus laevis (African clawed frog), this protein is Transcription factor Sox-12 (sox12).